A 184-amino-acid polypeptide reads, in one-letter code: Ribonuclease HII (184 aa).

The RNase H type-2 domain maps to 2–184; sequence AKICGIDEAG…KPKLAQSSLF (183 aa). Positions 8, 9, and 95 each coordinate a divalent metal cation.

Belongs to the RNase HII family. The cofactor is Mn(2+). Mg(2+) is required as a cofactor.

Its subcellular location is the cytoplasm. It carries out the reaction Endonucleolytic cleavage to 5'-phosphomonoester.. Functionally, endonuclease that specifically degrades the RNA of RNA-DNA hybrids. The polypeptide is Ribonuclease HII (Campylobacter concisus (strain 13826)).